Reading from the N-terminus, the 581-residue chain is Interleukin-22 receptor subunit alpha-1 (581 aa).

The first 15 residues, M1–A15, serve as a signal peptide directing secretion. The Extracellular portion of the chain corresponds to H16 to S230. 2 Fibronectin type-III domains span residues T18 to S115 and P141 to T221. Residues C71 and C79 are joined by a disulfide bond. N-linked (GlcNAc...) asparagine glycosylation is found at N80 and N172. C128 and C217 are oxidised to a cystine. The chain crosses the membrane as a helical span at residues F231–Y251. Over K252 to S581 the chain is Cytoplasmic. The disordered stretch occupies residues Q343 to Y364. Residues S410 and S414 each carry the phosphoserine; by GSK3-beta modification. Residue K449 forms a Glycyl lysine isopeptide (Lys-Gly) (interchain with G-Cter in ubiquitin) linkage.

The protein belongs to the type II cytokine receptor family. As to quaternary structure, heterodimer with IL10RB and with IL20RB. Post-translationally, phosphorylated by GSK3-BETA and MAPK; phosphorylation by GSK3-BETA stabilizes IL22RA1 by preventing its proteasomal degradation. In terms of tissue distribution, expressed in kidney, liver and lung.

Its subcellular location is the cell membrane. In terms of biological role, component of the receptor for IL20, IL22 and IL24. Component of IL22 receptor formed by IL22RA1 and IL10RB enabling IL22 signaling via JAK/STAT pathways. IL22 also induces activation of MAPK1/MAPK3 and Akt kinases pathways. Component of one of the receptor for IL20 and IL24 formed by IL22RA1 and IL20RB also signaling through STATs activation. Mediates IL24 antiangiogenic activity as well as IL24 inhibitory effect on endothelial cell tube formation and differentiation. This is Interleukin-22 receptor subunit alpha-1 (Il22ra1) from Mus musculus (Mouse).